A 514-amino-acid polypeptide reads, in one-letter code: Peptide chain release factor 3 (514 aa).

Residues 8–268 (KKRRTFAIIS…TFLEFAPEPH (261 aa)) enclose the tr-type G domain. Residues 17-24 (SHPDAGKT), 85-89 (DTPGH), and 139-142 (NKLD) each bind GTP.

Belongs to the TRAFAC class translation factor GTPase superfamily. Classic translation factor GTPase family. PrfC subfamily.

The protein resides in the cytoplasm. Its function is as follows. Increases the formation of ribosomal termination complexes and stimulates activities of RF-1 and RF-2. It binds guanine nucleotides and has strong preference for UGA stop codons. It may interact directly with the ribosome. The stimulation of RF-1 and RF-2 is significantly reduced by GTP and GDP, but not by GMP. The protein is Peptide chain release factor 3 of Streptococcus uberis (strain ATCC BAA-854 / 0140J).